Here is a 62-residue protein sequence, read N- to C-terminus: DNA-binding protein 7 (62 aa).

Belongs to the 7 kDa DNA-binding/endoribonuclease P2 family. As to quaternary structure, monomer.

The protein resides in the cytoplasm. Functionally, can constrain negative DNA supercoils. May be involved in maintaining the integrity of the genome at high temperature. The polypeptide is DNA-binding protein 7 (Metallosphaera cuprina (strain Ar-4)).